Here is an 839-residue protein sequence, read N- to C-terminus: V-type proton ATPase 116 kDa subunit a 1 (839 aa).

Residues 1–395 (MGELFRSEEM…DAYGIGTYRE (395 aa)) are Cytoplasmic-facing. 2 positions are modified to phosphothreonine: threonine 257 and threonine 367. Tyrosine 371 is modified (phosphotyrosine). A helical transmembrane segment spans residues 396–414 (INPAPYTVITFPFLFAVMF). Residues 415–416 (GD) are Vacuolar-facing. The chain crosses the membrane as a helical span at residues 417–433 (FGHGILMTLFAVWMVLR). Topologically, residues 434 to 448 (ESRILSQKHENEMFS) are cytoplasmic. The helical transmembrane segment at 449-478 (MVFSGRYIILLMGLFSIYTGLIYNDCFSKS) threads the bilayer. Residues 479–542 (LNIFGSSWSV…ATNKLTFLNS (64 aa)) lie on the Vacuolar side of the membrane. A helical membrane pass occupies residues 543-562 (FKMKMSVILGIIHMLFGVSL). The Cytoplasmic portion of the chain corresponds to 563–580 (SLFNHIYFKKPLNIYFGF). The helical transmembrane segment at 581 to 601 (IPEIIFMSSLFGYLVILIFYK) threads the bilayer. Residues 602–646 (WTAYDAHSSRNAPSLLIHFINMFLFSYPESGNAMLYSGQKGIQCF) lie on the Vacuolar side of the membrane. A helical transmembrane segment spans residues 647 to 666 (LIVVAMLCVPWMLLFKPLIL). At 667–726 (RHQYLRKKHLGTLNFGGIRVGNGPTEEDAEIIQHDQLSTHSEDAEEFDFGDTMVHQAIHT) the chain is on the cytoplasmic side. A helical membrane pass occupies residues 727–751 (IEYCLGCISNTASYLRLWALSLAHA). At 752–772 (QLSEVLWTMVIHIGLHVRSLA) the chain is on the vacuolar side. Residues 773–811 (GGLGLFFIFAAFATLTVAILLIMEGLSAFLHALRLHWVE) form a helical membrane-spanning segment. Topologically, residues 812-839 (FQNKFYTGTGFKFLPFSFEHIREGKFDE) are cytoplasmic.

This sequence belongs to the V-ATPase 116 kDa subunit family. As to quaternary structure, V-ATPase is a heteromultimeric enzyme made up of two complexes: the ATP-hydrolytic V1 complex and the proton translocation V0 complex. The V1 complex consists of three catalytic AB heterodimers that form a heterohexamer, three peripheral stalks each consisting of EG heterodimers, one central rotor including subunits D and F, and the regulatory subunits C and H. The proton translocation complex V0 consists of the proton transport subunit a, a ring of proteolipid subunits c9c'', rotary subunit d, subunits e and f, and the accessory subunits ATP6AP1/Ac45 and ATP6AP2/PRR. Interacts with SPAAR. Predominantly expressed in neurons in the cortex and in the dentate gyrus, CA1 and CA3 regions of the hippocampus (at protein level). Expressed at lower levels in astrocytes, oligodendrocytes and microglia (at protein level). In the cerebellum, present in Purkinje and granule cells (at protein level).

Its subcellular location is the cytoplasmic vesicle. The protein localises to the clathrin-coated vesicle membrane. It is found in the secretory vesicle. It localises to the synaptic vesicle membrane. The protein resides in the melanosome. Functionally, subunit of the V0 complex of vacuolar(H+)-ATPase (V-ATPase), a multisubunit enzyme composed of a peripheral complex (V1) that hydrolyzes ATP and a membrane integral complex (V0) that translocates protons. V-ATPase is responsible for the acidification of various organelles, such as lysosomes, endosomes, the trans-Golgi network, and secretory granules, including synaptic vesicles. In certain cell types, can be exported to the plasma membrane, where it is involved in the acidification of the extracellular environment. Required for assembly and activity of the vacuolar ATPase. Through its action on compartment acidification, plays an essential role in neuronal development in terms of integrity and connectivity of neurons. The chain is V-type proton ATPase 116 kDa subunit a 1 (Atp6v0a1) from Mus musculus (Mouse).